Reading from the N-terminus, the 525-residue chain is Neuropilin and tolloid-like protein 2 (525 aa).

Residues 1-22 (MALERLCSVLKVLLITVLVVEG) form the signal peptide. The Extracellular portion of the chain corresponds to 23 to 347 (IAVAQKTQDG…GVFEQITKTH (325 aa)). Intrachain disulfides connect cysteine 45–cysteine 72, cysteine 100–cysteine 122, cysteine 177–cysteine 207, cysteine 234–cysteine 256, cysteine 297–cysteine 309, cysteine 304–cysteine 322, and cysteine 316–cysteine 331. CUB domains follow at residues 45–159 (CGIW…YSFI) and 177–292 (CQFE…FTSF). The 37-residue stretch at 296–332 (PCTSSTFFCHSNMCINNSLVCNGVQNCAYPWDENHCK) folds into the LDL-receptor class A domain. Asparagine 311 carries N-linked (GlcNAc...) asparagine glycosylation. Residues 348–368 (GTIIGITSGIVLVLLIISILV) traverse the membrane as a helical segment. The Cytoplasmic portion of the chain corresponds to 369-525 (QVKQPRKKVM…SAQASISIDF (157 aa)). Serine 409 bears the Phosphoserine mark.

As to quaternary structure, interacts with GRIK2 and GRIK3, but neither with AMPA-nor with NMDA-sensitive glutamate receptors. In terms of processing, N-glycosylated.

Its subcellular location is the membrane. In terms of biological role, accessory subunit of neuronal kainate-sensitive glutamate receptors, GRIK2 and GRIK3. Increases kainate-receptor channel activity, slowing the decay kinetics of the receptors, without affecting their expression at the cell surface, and increasing the open probability of the receptor channels. Modulates the agonist sensitivity of kainate receptors. Slows the decay of kainate receptor-mediated excitatory postsynaptic currents (EPSCs), thus directly influencing synaptic transmission. This chain is Neuropilin and tolloid-like protein 2 (NETO2), found in Homo sapiens (Human).